A 317-amino-acid chain; its full sequence is Ribosomal lysine N-methyltransferase 5 (317 aa).

S-adenosyl-L-methionine is bound by residues Trp-87, Gly-141–Gly-143, Asp-163, Trp-214, and Leu-237.

The protein belongs to the class I-like SAM-binding methyltransferase superfamily. RKM5 family.

In terms of biological role, S-adenosyl-L-methionine-dependent protein-lysine N-methyltransferase that methylates 60S ribosomal protein L1. The protein is Ribosomal lysine N-methyltransferase 5 (RKM5) of Eremothecium gossypii (strain ATCC 10895 / CBS 109.51 / FGSC 9923 / NRRL Y-1056) (Yeast).